The following is a 145-amino-acid chain: Transcription antitermination protein NusB (145 aa).

This sequence belongs to the NusB family.

Involved in transcription antitermination. Required for transcription of ribosomal RNA (rRNA) genes. Binds specifically to the boxA antiterminator sequence of the ribosomal RNA (rrn) operons. In Acetivibrio thermocellus (strain ATCC 27405 / DSM 1237 / JCM 9322 / NBRC 103400 / NCIMB 10682 / NRRL B-4536 / VPI 7372) (Clostridium thermocellum), this protein is Transcription antitermination protein NusB.